Consider the following 348-residue polypeptide: Rhodopsin (348 aa).

M1 carries the N-acetylmethionine modification. At 1 to 36 (MNGTEGPNFYVPFSNKTGVVRSPFEYPQYYLAEPWQ) the chain is on the extracellular side. N2 and N15 each carry an N-linked (GlcNAc...) asparagine glycan. Residues 37 to 61 (FSMLAAYMFLLIVLGFPINFLTLYV) traverse the membrane as a helical segment. At 62-73 (TVQHKKLRTPLN) the chain is on the cytoplasmic side. The chain crosses the membrane as a helical span at residues 74–96 (YILLNLAVADLFMVFGGFTTTLY). At 97–110 (TSLHGYFVFGPTGC) the chain is on the extracellular side. Cysteines 110 and 187 form a disulfide. The helical transmembrane segment at 111-133 (NVEGFFATLGGEIALWSLVVLAI) threads the bilayer. Residues 134 to 136 (ERY) carry the 'Ionic lock' involved in activated form stabilization motif. Over 134–152 (ERYVVVCKPMSNFRFGENH) the chain is Cytoplasmic. Residues 153 to 173 (AIMGVAFTWVMALACAAPPLA) traverse the membrane as a helical segment. The Extracellular segment spans residues 174 to 202 (GWSRYIPEGMQCSCGIDYYTLKPEVNNES). Zn(2+) is bound at residue E201. The chain crosses the membrane as a helical span at residues 203–224 (FVIYMFVVHFTIPMIVIFFCYG). At 225 to 252 (QLVFTVKEAAAQQQESATTQKAEKEVTR) the chain is on the cytoplasmic side. A helical transmembrane segment spans residues 253 to 274 (MVIIMVIAFLICWVPYASVAFY). Residues 275 to 286 (IFTHQGSNFGPI) are Extracellular-facing. Q279 is a binding site for Zn(2+). Residues 287–308 (FMTLPAFFAKSASIYNPVIYIM) form a helical membrane-spanning segment. An N6-(retinylidene)lysine modification is found at K296. Over 309–348 (MNKQFRNCMLTTICCGKNPFAEEEGATTVSKTETSQVAPA) the chain is Cytoplasmic. 2 S-palmitoyl cysteine lipidation sites follow: C322 and C323. The interaction with SAG stretch occupies residues 330 to 348 (EEEGATTVSKTETSQVAPA). 2 positions are modified to phosphothreonine: T335 and T336. Residue S338 is modified to Phosphoserine. A phosphothreonine mark is found at T340 and T342. Residue S343 is modified to Phosphoserine.

It belongs to the G-protein coupled receptor 1 family. Opsin subfamily. Homodimer. May form a complex composed of RHO, GRK1 and RCVRN in a Ca(2+)-dependent manner; RCVRN prevents the interaction between GRK1 and RHO. Interacts with GRK1. Interacts (phosphorylated form) with SAG. Interacts with GNAT1. Interacts with GNAT3. SAG and G-proteins compete for a common binding site. Interacts with PRCD; the interaction promotes PRCD stability. Forms a complex with ASAP1 and ARF4. Forms a complex with ASAP1, RAB11A, Rabin8/RAB3IP, ARF4 and RAB11FIP3; the complex regulates Golgi-to-cilia rhodopsin/RHO transport in photoreceptors. Phosphorylated on some or all of the serine and threonine residues present in the C-terminal region. In terms of processing, contains one covalently linked retinal chromophore. Upon light absorption, the covalently bound 11-cis-retinal is converted to all-trans-retinal. After hydrolysis of the Schiff base and release of the covalently bound all-trans-retinal, active rhodopsin is regenerated by binding of a fresh molecule of 11-cis-retinal.

It is found in the membrane. Its subcellular location is the cell projection. The protein localises to the cilium. It localises to the photoreceptor outer segment. Photoreceptor required for image-forming vision at low light intensity. Required for photoreceptor cell viability after birth. Light-induced isomerization of 11-cis to all-trans retinal triggers a conformational change that activates signaling via G-proteins. Subsequent receptor phosphorylation mediates displacement of the bound G-protein alpha subunit by the arrestin SAG and terminates signaling. The protein is Rhodopsin (RHO) of Trichechus manatus (Caribbean manatee).